Consider the following 255-residue polypeptide: Thiazole synthase (255 aa).

The active-site Schiff-base intermediate with DXP is the lysine 95. 1-deoxy-D-xylulose 5-phosphate is bound by residues glycine 156, 182-183, and 204-205; these read AG and NT.

Belongs to the ThiG family. In terms of assembly, homotetramer. Forms heterodimers with either ThiH or ThiS.

The protein resides in the cytoplasm. The catalysed reaction is [ThiS sulfur-carrier protein]-C-terminal-Gly-aminoethanethioate + 2-iminoacetate + 1-deoxy-D-xylulose 5-phosphate = [ThiS sulfur-carrier protein]-C-terminal Gly-Gly + 2-[(2R,5Z)-2-carboxy-4-methylthiazol-5(2H)-ylidene]ethyl phosphate + 2 H2O + H(+). It functions in the pathway cofactor biosynthesis; thiamine diphosphate biosynthesis. Catalyzes the rearrangement of 1-deoxy-D-xylulose 5-phosphate (DXP) to produce the thiazole phosphate moiety of thiamine. Sulfur is provided by the thiocarboxylate moiety of the carrier protein ThiS. In vitro, sulfur can be provided by H(2)S. This Vibrio campbellii (strain ATCC BAA-1116) protein is Thiazole synthase.